An 828-amino-acid chain; its full sequence is Deubiquitinase MYSM1 (828 aa).

The span at 1 to 12 shows a compositional bias: acidic residues; the sequence is MAAEEADVDIEG. Residues 1-31 form a disordered region; sequence MAAEEADVDIEGDVVAAAGAQPGSGENTASV. Ser-110 is subject to Phosphoserine. Positions 116-167 constitute an SANT domain; the sequence is SYSVKWTIEEKELFEQGLAKFGRRWTKISKLIGSRTVLQVKSYARQYFKNKV. Lys-187 is covalently cross-linked (Glycyl lysine isopeptide (Lys-Gly) (interchain with G-Cter in SUMO2)). Position 218 is a phosphoserine (Ser-218). Thr-236 bears the Phosphothreonine mark. 3 positions are modified to phosphoserine: Ser-242, Ser-267, and Ser-340. An SWIRM domain is found at 372–470; sequence LKPPEQEIEI…FGCEQAVYNR (99 aa). The 133-residue stretch at 577–709 folds into the MPN domain; the sequence is VKVASEALLI…PLPYSQITCL (133 aa). The Zn(2+) site is built by His-656, His-658, and Asp-669. The JAMM motif signature appears at 656 to 669; the sequence is HSHPAFDPNPSLRD. An LXXLL motif motif is present at residues 774–778; that stretch reads LQKLL.

Belongs to the peptidase M67A family. MYSM1 subfamily. In terms of assembly, component of a large chromatin remodeling complex, at least composed of MYSM1, PCAF, RBM10 and KIF11/TRIP5. Binds histones. Interacts with NFIL3; this interaction is critical for their correct recruitment to the ID2 locus during natural killer cell maturation.

The protein resides in the nucleus. It localises to the cytoplasm. Metalloprotease with deubiquitinase activity that plays important regulator roles in hematopoietic stem cell function, blood cell production and immune response. Participates in the normal programming of B-cell responses to antigen after the maturation process. Within the cytoplasm, plays critical roles in the repression of innate immunity and autoimmunity. Removes 'Lys-63'-linked polyubiquitins from TRAF3 and TRAF6 complexes. Attenuates NOD2-mediated inflammation and tissue injury by promoting 'Lys-63'-linked deubiquitination of RIPK2 component. Suppresses the CGAS-STING1 signaling pathway by cleaving STING1 'Lys-63'-linked ubiquitin chains. In the nucleus, acts as a hematopoietic transcription regulator derepressing a range of genes essential for normal stem cell differentiation including EBF1 and PAX5 in B-cells, ID2 in NK-cell progenitor or FLT3 in dendritic cell precursors. Deubiquitinates monoubiquitinated histone H2A, a specific tag for epigenetic transcriptional repression, leading to dissociation of histone H1 from the nucleosome. The protein is Deubiquitinase MYSM1 (MYSM1) of Homo sapiens (Human).